The primary structure comprises 146 residues: Catabolic 3-dehydroquinase (146 aa).

Residue Tyr-24 is the Proton acceptor of the active site. Substrate is bound by residues Asn-78, His-84, and Asp-91. His-104 acts as the Proton donor in catalysis. Residues 105–106 and Arg-115 each bind substrate; that span reads IT.

This sequence belongs to the type-II 3-dehydroquinase family. As to quaternary structure, homododecamer. Adopts a ring-like structure, composed of an arrangement of two hexameric rings stacked on top of one another.

It catalyses the reaction 3-dehydroquinate = 3-dehydroshikimate + H2O. It functions in the pathway aromatic compound metabolism; 3,4-dihydroxybenzoate biosynthesis; 3,4-dihydroxybenzoate from 3-dehydroquinate: step 1/2. Its function is as follows. Is involved in the catabolism of quinate. Allows the utilization of quinate as carbon source via the beta-ketoadipate pathway. In Candida tropicalis (strain ATCC MYA-3404 / T1) (Yeast), this protein is Catabolic 3-dehydroquinase.